Consider the following 83-residue polypeptide: Small ribosomal subunit protein bS18A (83 aa).

This sequence belongs to the bacterial ribosomal protein bS18 family. In terms of assembly, part of the 30S ribosomal subunit. Forms a tight heterodimer with protein bS6.

Its function is as follows. Binds as a heterodimer with protein bS6 to the central domain of the 16S rRNA, where it helps stabilize the platform of the 30S subunit. This chain is Small ribosomal subunit protein bS18A, found in Nocardia farcinica (strain IFM 10152).